The following is a 425-amino-acid chain: Riboflavin biosynthesis protein RibBA (425 aa).

The DHBP synthase stretch occupies residues 1–204 (MTRLDSVERA…IADLIEWRRK (204 aa)). D-ribulose 5-phosphate-binding positions include 28 to 29 (RE), Asp-33, 141 to 145 (RPGHT), and Glu-165. Glu-29 is a Mg(2+) binding site. His-144 is a Mg(2+) binding site. Positions 205–425 (HEKHIERVAE…HLPGEFGGAL (221 aa)) are GTP cyclohydrolase II. A GTP-binding site is contributed by 259–263 (RVHSE). Zn(2+) contacts are provided by Cys-264, Cys-275, and Cys-277. Residues Gln-280, 303 to 305 (EGR), and Thr-325 each bind GTP. Catalysis depends on Asp-337, which acts as the Proton acceptor; for GTP cyclohydrolase activity. Arg-339 functions as the Nucleophile; for GTP cyclohydrolase activity in the catalytic mechanism. GTP contacts are provided by Thr-360 and Lys-365.

This sequence in the N-terminal section; belongs to the DHBP synthase family. It in the C-terminal section; belongs to the GTP cyclohydrolase II family. Mg(2+) is required as a cofactor. Requires Mn(2+) as cofactor. The cofactor is Zn(2+).

The enzyme catalyses D-ribulose 5-phosphate = (2S)-2-hydroxy-3-oxobutyl phosphate + formate + H(+). It carries out the reaction GTP + 4 H2O = 2,5-diamino-6-hydroxy-4-(5-phosphoribosylamino)-pyrimidine + formate + 2 phosphate + 3 H(+). It functions in the pathway cofactor biosynthesis; riboflavin biosynthesis; 2-hydroxy-3-oxobutyl phosphate from D-ribulose 5-phosphate: step 1/1. The protein operates within cofactor biosynthesis; riboflavin biosynthesis; 5-amino-6-(D-ribitylamino)uracil from GTP: step 1/4. Catalyzes the conversion of D-ribulose 5-phosphate to formate and 3,4-dihydroxy-2-butanone 4-phosphate. Functionally, catalyzes the conversion of GTP to 2,5-diamino-6-ribosylamino-4(3H)-pyrimidinone 5'-phosphate (DARP), formate and pyrophosphate. In Mycobacterium ulcerans (strain Agy99), this protein is Riboflavin biosynthesis protein RibBA.